We begin with the raw amino-acid sequence, 250 residues long: ATP synthase subunit a (250 aa).

5 helical membrane-spanning segments follow: residues 27-47 (TDTV…AFYL), 83-103 (IAPF…ISNW), 129-149 (INYV…AGIW), 191-211 (IFAG…IMWA), and 219-239 (FDLF…ILYF).

It belongs to the ATPase A chain family. In terms of assembly, F-type ATPases have 2 components, CF(1) - the catalytic core - and CF(0) - the membrane proton channel. CF(1) has five subunits: alpha(3), beta(3), gamma(1), delta(1), epsilon(1). CF(0) has three main subunits: a(1), b(2) and c(9-12). The alpha and beta chains form an alternating ring which encloses part of the gamma chain. CF(1) is attached to CF(0) by a central stalk formed by the gamma and epsilon chains, while a peripheral stalk is formed by the delta and b chains.

It is found in the cell membrane. In terms of biological role, key component of the proton channel; it plays a direct role in the translocation of protons across the membrane. The chain is ATP synthase subunit a from Mycobacterium ulcerans (strain Agy99).